Here is a 1390-residue protein sequence, read N- to C-terminus: Nuclear pore complex protein Nup155 (1390 aa).

Residue serine 525 is glycosylated (O-linked (GlcNAc) serine). Positions 598–632 (GSPMYSSSPVPTGSPYPNPSSLGTPSHGAQPPTMS) are disordered. A Glycyl lysine isopeptide (Lys-Gly) (interchain with G-Cter in SUMO2) cross-link involves residue lysine 739. Residues 984 to 1011 (QSKAAPQSPSVPKKPGPPVLSSDPNMLS) form a disordered region. Serine 1056 is subject to Phosphoserine.

It belongs to the non-repetitive/WGA-negative nucleoporin family. In terms of assembly, interacts with GLE1. Able to form a heterotrimer with GLE1 and NUP42 in vitro. Forms a complex with NUP35, NUP93, NUP205 and lamin B. Phosphorylated. Phosphorylation and dephosphorylation may be important for the function of NUP155 and may play a role in the reversible disassembly of the nuclear pore complex during mitosis. In terms of processing, disulfide-linked to NUP62. The inner channel of the NPC has a different redox environment from the cytoplasm and allows the formation of interchain disulfide bonds between some nucleoporins, the significant increase of these linkages upon oxidative stress reduces the permeability of the NPC.

It localises to the nucleus. The protein localises to the nuclear pore complex. It is found in the nucleus membrane. Essential component of nuclear pore complex. Could be essessential for embryogenesis. Nucleoporins may be involved both in binding and translocating proteins during nucleocytoplasmic transport. This Rattus norvegicus (Rat) protein is Nuclear pore complex protein Nup155 (Nup155).